The following is a 343-amino-acid chain: S-adenosylmethionine:tRNA ribosyltransferase-isomerase (343 aa).

It belongs to the QueA family. Monomer.

It localises to the cytoplasm. It carries out the reaction 7-aminomethyl-7-carbaguanosine(34) in tRNA + S-adenosyl-L-methionine = epoxyqueuosine(34) in tRNA + adenine + L-methionine + 2 H(+). Its pathway is tRNA modification; tRNA-queuosine biosynthesis. Transfers and isomerizes the ribose moiety from AdoMet to the 7-aminomethyl group of 7-deazaguanine (preQ1-tRNA) to give epoxyqueuosine (oQ-tRNA). The protein is S-adenosylmethionine:tRNA ribosyltransferase-isomerase of Borreliella burgdorferi (strain ATCC 35210 / DSM 4680 / CIP 102532 / B31) (Borrelia burgdorferi).